The following is a 504-amino-acid chain: Glucose-6-phosphate isomerase (504 aa).

Glu-333 (proton donor) is an active-site residue. Active-site residues include His-364 and Lys-473.

The protein belongs to the GPI family.

Its subcellular location is the cytoplasm. It carries out the reaction alpha-D-glucose 6-phosphate = beta-D-fructose 6-phosphate. It participates in carbohydrate biosynthesis; gluconeogenesis. It functions in the pathway carbohydrate degradation; glycolysis; D-glyceraldehyde 3-phosphate and glycerone phosphate from D-glucose: step 2/4. Its function is as follows. Catalyzes the reversible isomerization of glucose-6-phosphate to fructose-6-phosphate. The sequence is that of Glucose-6-phosphate isomerase from Stenotrophomonas maltophilia (strain K279a).